The following is a 588-amino-acid chain: Aspartate--tRNA ligase (588 aa).

E172 lines the L-aspartate pocket. The interval 196 to 199 is aspartate; sequence QLFK. L-aspartate is bound at residue R218. ATP is bound by residues 218 to 220 and Q227; that span reads RDE. Residue H449 participates in L-aspartate binding. Residue E483 participates in ATP binding. R490 is an L-aspartate binding site. An ATP-binding site is contributed by 535–538; the sequence is GLDR.

Belongs to the class-II aminoacyl-tRNA synthetase family. Type 1 subfamily. Homodimer.

It localises to the cytoplasm. It carries out the reaction tRNA(Asp) + L-aspartate + ATP = L-aspartyl-tRNA(Asp) + AMP + diphosphate. Functionally, catalyzes the attachment of L-aspartate to tRNA(Asp) in a two-step reaction: L-aspartate is first activated by ATP to form Asp-AMP and then transferred to the acceptor end of tRNA(Asp). This chain is Aspartate--tRNA ligase, found in Haemophilus influenzae (strain PittGG).